Consider the following 153-residue polypeptide: ORM1-like protein 3 (153 aa).

The segment at 1 to 17 (MNVGTAHSEVNPNTRVM) is important for ceramide level-sensing. The Cytoplasmic segment spans residues 1–21 (MNVGTAHSEVNPNTRVMNSRG). 2 consecutive transmembrane segments (helical) span residues 22–42 (IWLS…SIPF) and 43–63 (VSVP…MYIF). Residues 64-94 (LHTVKGTPFETPDQGKARLLTHWEQMDYGVQ) lie on the Cytoplasmic side of the membrane. Residues 95–117 (FTASRKFLTITPIVLYFLTSFYT) traverse the membrane as a helical segment. Topologically, residues 118 to 121 (KYDQ) are extracellular. Residues 122–142 (IHFILNTVSLMSVLIPKLPQL) traverse the membrane as a helical segment. Position 137 is a hydroxyproline (Pro-137). Over 143–153 (HGVRIFGINKY) the chain is Cytoplasmic.

This sequence belongs to the ORM family. As to quaternary structure, ceramide-sensitive subunit of the serine palmitoyltransferase (SPT) complex, which is also composed of SPTLC1, SPTLC2/3 and SPTSSA/B. In terms of processing, when hydroxylated at Pro-137, ubiquitinated via 'Lys-48'-linkage, leading to proteasomal degradation. In endothelial cells, ORMDL3 proteasomal degradation is controlled by the sphingosine 1-phosphate receptor signaling pathway.

It is found in the endoplasmic reticulum membrane. Its function is as follows. Plays an essential role in the homeostatic regulation of sphingolipid de novo biosynthesis by modulating the activity of the serine palmitoyltransferase (SPT) in response to ceramide levels. When complexed to SPT, the binding of ceramides to its N-terminus stabilizes a conformation that block SPT substrate entry, hence preventing SPT catalytic activity. Through this mechanism, maintains ceramide levels at sufficient concentrations for the production of complex sphingolipids, but which prevents the accumulation of ceramides to levels that trigger apoptosis. The protein is ORM1-like protein 3 (ORMDL3) of Bos taurus (Bovine).